The primary structure comprises 144 residues: Virulence protein STM3117 (144 aa).

The VOC domain occupies 23-143 (RIDHLVLTVS…DGNLIEISQY (121 aa)).

In terms of biological role, is critically involved in promoting the replication of S.typhimurium cells inside host macrophages, suggesting a role in the establishment of bacterial colonization within macrophages. May be involved in the biosynthesis and modification of the peptidoglycan layer of the cell wall. This chain is Virulence protein STM3117, found in Salmonella typhimurium (strain LT2 / SGSC1412 / ATCC 700720).